The primary structure comprises 363 residues: 3-dehydroquinate synthase (363 aa).

NAD(+)-binding positions include 134–135 (TT), Lys-147, and Lys-156. 3 residues coordinate Zn(2+): Glu-189, His-254, and His-271.

The protein belongs to the sugar phosphate cyclases superfamily. Dehydroquinate synthase family. Co(2+) serves as cofactor. The cofactor is Zn(2+). It depends on NAD(+) as a cofactor.

The protein localises to the cytoplasm. The enzyme catalyses 7-phospho-2-dehydro-3-deoxy-D-arabino-heptonate = 3-dehydroquinate + phosphate. The protein operates within metabolic intermediate biosynthesis; chorismate biosynthesis; chorismate from D-erythrose 4-phosphate and phosphoenolpyruvate: step 2/7. Functionally, catalyzes the conversion of 3-deoxy-D-arabino-heptulosonate 7-phosphate (DAHP) to dehydroquinate (DHQ). The chain is 3-dehydroquinate synthase from Prochlorococcus marinus (strain MIT 9215).